A 313-amino-acid chain; its full sequence is 4-hydroxy-3-methylbut-2-enyl diphosphate reductase (313 aa).

Cys12 contacts [4Fe-4S] cluster. (2E)-4-hydroxy-3-methylbut-2-enyl diphosphate is bound by residues His41 and His74. Residues His41 and His74 each coordinate dimethylallyl diphosphate. His41 and His74 together coordinate isopentenyl diphosphate. Residue Cys96 coordinates [4Fe-4S] cluster. His124 provides a ligand contact to (2E)-4-hydroxy-3-methylbut-2-enyl diphosphate. Residue His124 participates in dimethylallyl diphosphate binding. His124 serves as a coordination point for isopentenyl diphosphate. Glu126 (proton donor) is an active-site residue. (2E)-4-hydroxy-3-methylbut-2-enyl diphosphate is bound at residue Thr167. Cys197 contacts [4Fe-4S] cluster. Ser225, Ser226, Asn227, and Ser269 together coordinate (2E)-4-hydroxy-3-methylbut-2-enyl diphosphate. Dimethylallyl diphosphate contacts are provided by Ser225, Ser226, Asn227, and Ser269. Isopentenyl diphosphate-binding residues include Ser225, Ser226, Asn227, and Ser269.

This sequence belongs to the IspH family. As to quaternary structure, homodimer. It depends on [4Fe-4S] cluster as a cofactor.

It catalyses the reaction isopentenyl diphosphate + 2 oxidized [2Fe-2S]-[ferredoxin] + H2O = (2E)-4-hydroxy-3-methylbut-2-enyl diphosphate + 2 reduced [2Fe-2S]-[ferredoxin] + 2 H(+). It carries out the reaction dimethylallyl diphosphate + 2 oxidized [2Fe-2S]-[ferredoxin] + H2O = (2E)-4-hydroxy-3-methylbut-2-enyl diphosphate + 2 reduced [2Fe-2S]-[ferredoxin] + 2 H(+). Its pathway is isoprenoid biosynthesis; dimethylallyl diphosphate biosynthesis; dimethylallyl diphosphate from (2E)-4-hydroxy-3-methylbutenyl diphosphate: step 1/1. It functions in the pathway isoprenoid biosynthesis; isopentenyl diphosphate biosynthesis via DXP pathway; isopentenyl diphosphate from 1-deoxy-D-xylulose 5-phosphate: step 6/6. In terms of biological role, catalyzes the conversion of 1-hydroxy-2-methyl-2-(E)-butenyl 4-diphosphate (HMBPP) into a mixture of isopentenyl diphosphate (IPP) and dimethylallyl diphosphate (DMAPP). Acts in the terminal step of the DOXP/MEP pathway for isoprenoid precursor biosynthesis. This Buchnera aphidicola subsp. Schizaphis graminum (strain Sg) protein is 4-hydroxy-3-methylbut-2-enyl diphosphate reductase.